A 293-amino-acid polypeptide reads, in one-letter code: Mating-type protein A-1 (293 aa).

The alpha box DNA-binding region spans 42–97; that stretch reads AAKKKVNGFMGFRSYYSPLFSQLPQKERSPFMTILWQHDPFHNEWDFMCSVYSSIR.

Belongs to the MATALPHA1 family.

Its subcellular location is the nucleus. Its function is as follows. Mating type proteins are sequence specific DNA-binding proteins that act as master switches in yeast differentiation by controlling gene expression in a cell type-specific fashion. Transcriptional activator that induces the transcription of A-specific genes like mating factor ccg-4. Required for mating as an A-cell and for blocking of heterokaryon formation (vegetative incompatibility). The sequence is that of Mating-type protein A-1 (mtA-1) from Neurospora crassa (strain ATCC 24698 / 74-OR23-1A / CBS 708.71 / DSM 1257 / FGSC 987).